The chain runs to 425 residues: Serine--tRNA ligase (425 aa).

L-serine is bound at residue 230–232; sequence TAE. Position 261–263 (261–263) interacts with ATP; that stretch reads RSE. Glutamate 284 is an L-serine binding site. ATP is bound at residue 348-351; that stretch reads EISS. Serine 384 serves as a coordination point for L-serine.

It belongs to the class-II aminoacyl-tRNA synthetase family. Type-1 seryl-tRNA synthetase subfamily. As to quaternary structure, homodimer. The tRNA molecule binds across the dimer.

It is found in the cytoplasm. The catalysed reaction is tRNA(Ser) + L-serine + ATP = L-seryl-tRNA(Ser) + AMP + diphosphate + H(+). It carries out the reaction tRNA(Sec) + L-serine + ATP = L-seryl-tRNA(Sec) + AMP + diphosphate + H(+). It functions in the pathway aminoacyl-tRNA biosynthesis; selenocysteinyl-tRNA(Sec) biosynthesis; L-seryl-tRNA(Sec) from L-serine and tRNA(Sec): step 1/1. Its function is as follows. Catalyzes the attachment of serine to tRNA(Ser). Is also able to aminoacylate tRNA(Sec) with serine, to form the misacylated tRNA L-seryl-tRNA(Sec), which will be further converted into selenocysteinyl-tRNA(Sec). The chain is Serine--tRNA ligase from Streptococcus thermophilus (strain ATCC BAA-491 / LMD-9).